Here is a 232-residue protein sequence, read N- to C-terminus: Large ribosomal subunit protein uL1 (232 aa).

Belongs to the universal ribosomal protein uL1 family. As to quaternary structure, part of the 50S ribosomal subunit.

Binds directly to 23S rRNA. The L1 stalk is quite mobile in the ribosome, and is involved in E site tRNA release. Its function is as follows. Protein L1 is also a translational repressor protein, it controls the translation of the L11 operon by binding to its mRNA. In Xylella fastidiosa (strain M12), this protein is Large ribosomal subunit protein uL1.